The sequence spans 610 residues: Isocitrate dehydrogenase kinase/phosphatase (610 aa).

ATP contacts are provided by residues 359–365 and K380; that span reads APGFKGT. D419 is a catalytic residue.

It belongs to the AceK family.

The protein resides in the cytoplasm. The enzyme catalyses L-seryl-[isocitrate dehydrogenase] + ATP = O-phospho-L-seryl-[isocitrate dehydrogenase] + ADP + H(+). Its function is as follows. Bifunctional enzyme which can phosphorylate or dephosphorylate isocitrate dehydrogenase (IDH) on a specific serine residue. This is a regulatory mechanism which enables bacteria to bypass the Krebs cycle via the glyoxylate shunt in response to the source of carbon. When bacteria are grown on glucose, IDH is fully active and unphosphorylated, but when grown on acetate or ethanol, the activity of IDH declines drastically concomitant with its phosphorylation. This is Isocitrate dehydrogenase kinase/phosphatase from Rhodopseudomonas palustris (strain ATCC BAA-98 / CGA009).